The chain runs to 129 residues: MSSSTVRDLQRDLENKANDLGKIQKDIGKNHQLRKKYTIQLGENELVLKELDLLEEDANVYKLIGPVLVKQDLAEANANVRKRIEYISAELKRLDAILQDMEEKQNNKRETIMKLQQRLQTIQAGKAKA.

Coiled-coil stretches lie at residues 6 to 26 (VRDL…IQKD) and 84 to 118 (IEYI…LQQR).

It belongs to the prefoldin subunit beta family. Heterohexamer of two PFD-alpha type and four PFD-beta type subunits forming prefoldin co-chaperone complex. Interacts with PFD2, PFD3, PFD4 and PFD5. Interacts with LSM8, a specific subunit of the LSM2-8 complex, which is a core component of the spliceosome. Binds to HSP90 to facilitate the formation of a larger complex made at least of HSP90, PFD6 and LSM8.

The protein resides in the cytoplasm. It localises to the nucleus. In terms of biological role, binds specifically to cytosolic chaperonin (c-CPN) and transfers target proteins to it. Binds to nascent polypeptide chain and promotes folding in an environment in which there are many competing pathways for nonnative proteins. Together with other chaperonins, contribute to the regulation of gene expression by modulating the spliceosome function on pre-mRNA splicing post-transcriptionally by acting as a co-chaperone of Hsp90 to control levels of LSM8. Required for the biogenesis of tubulins and for subsequent microtubules (MTs) organization and dynamicity, but unable to associate with microtubules. Involved in the process leading to microtubules dissociation in response to gibberellic acid (GA) probably due to the DELLA proteins-mediated translocation of the prefoldin co-chaperone complex from the cytoplasm to the nucleus. Contributes to the GA-dependent regulation of PIN2 trafficking at the plasma membrane, thus influencing auxin flux. The polypeptide is Prefoldin subunit 6 (Arabidopsis thaliana (Mouse-ear cress)).